Reading from the N-terminus, the 57-residue chain is MDDTLPKQMTPTDTSPLKEEQAHCNNKTLENQPKNINDNKCTDSQNTDLQNTEPSKV.

Residues 1–57 form a disordered region; the sequence is MDDTLPKQMTPTDTSPLKEEQAHCNNKTLENQPKNINDNKCTDSQNTDLQNTEPSKV. Residues 23 to 57 show a composition bias toward polar residues; the sequence is HCNNKTLENQPKNINDNKCTDSQNTDLQNTEPSKV.

This is an uncharacterized protein from Ornithodoros (relapsing fever ticks).